Here is a 292-residue protein sequence, read N- to C-terminus: Aspartate carbamoyltransferase catalytic subunit (292 aa).

Residues Arg49 and Thr50 each contribute to the carbamoyl phosphate site. Residue Lys77 coordinates L-aspartate. Carbamoyl phosphate-binding residues include Arg99, His127, and Gln130. Residues Arg161 and Arg211 each contribute to the L-aspartate site. Carbamoyl phosphate is bound by residues Gly250 and Pro251.

This sequence belongs to the aspartate/ornithine carbamoyltransferase superfamily. ATCase family. Heterododecamer (2C3:3R2) of six catalytic PyrB chains organized as two trimers (C3), and six regulatory PyrI chains organized as three dimers (R2).

It carries out the reaction carbamoyl phosphate + L-aspartate = N-carbamoyl-L-aspartate + phosphate + H(+). It functions in the pathway pyrimidine metabolism; UMP biosynthesis via de novo pathway; (S)-dihydroorotate from bicarbonate: step 2/3. In terms of biological role, catalyzes the condensation of carbamoyl phosphate and aspartate to form carbamoyl aspartate and inorganic phosphate, the committed step in the de novo pyrimidine nucleotide biosynthesis pathway. This is Aspartate carbamoyltransferase catalytic subunit from Campylobacter lari (strain RM2100 / D67 / ATCC BAA-1060).